A 1772-amino-acid polypeptide reads, in one-letter code: Putative stereocilin-like protein (1772 aa).

Residues M1–A25 form the signal peptide. N-linked (GlcNAc...) asparagine glycosylation is found at N65, N427, N476, and N565.

This sequence belongs to the stereocilin family.

It is found in the secreted. In Homo sapiens (Human), this protein is Putative stereocilin-like protein (STRCP1).